Consider the following 272-residue polypeptide: uncharacterized protein (272 aa).

A disordered region spans residues 193–250 (AFLLPNNSKGVEKSEENEDGVTDNDSSNVNSSTNESPNPTDINVCSNDDATDNTENNL). Residues 215–233 (DNDSSNVNSSTNESPNPTD) are compositionally biased toward low complexity. Residues 235-248 (NVCSNDDATDNTEN) show a composition bias toward polar residues.

It belongs to the pal1 family.

The protein resides in the cytoplasm. The protein localises to the nucleus. This is an uncharacterized protein from Schizosaccharomyces pombe (strain 972 / ATCC 24843) (Fission yeast).